The primary structure comprises 142 residues: Hemoglobin subunit alpha (142 aa).

The 141-residue stretch at 2–142 folds into the Globin domain; sequence VLSPADKTNV…VSTVLTSKYR (141 aa). A Phosphoserine modification is found at S4. Residue K8 is modified to N6-succinyllysine. T9 is subject to Phosphothreonine. Residue K12 is modified to N6-succinyllysine. Position 17 is an N6-acetyllysine; alternate (K17). K17 carries the N6-succinyllysine; alternate modification. Phosphotyrosine is present on Y25. Phosphoserine is present on S36. Position 41 is an N6-succinyllysine (K41). Phosphoserine is present on S50. An O2-binding site is contributed by H59. H88 provides a ligand contact to heme b. At S103 the chain carries Phosphoserine. T109 is modified (phosphothreonine). A phosphoserine mark is found at S125 and S132. Phosphothreonine occurs at positions 135 and 138. Residue S139 is modified to Phosphoserine.

The protein belongs to the globin family. In terms of assembly, heterotetramer of two alpha chains and two beta chains in adult hemoglobin A (HbA); two alpha chains and two delta chains in adult hemoglobin A2 (HbA2); two alpha chains and two epsilon chains in early embryonic hemoglobin Gower-2; two alpha chains and two gamma chains in fetal hemoglobin F (HbF). Red blood cells.

Involved in oxygen transport from the lung to the various peripheral tissues. In terms of biological role, hemopressin acts as an antagonist peptide of the cannabinoid receptor CNR1. Hemopressin-binding efficiently blocks cannabinoid receptor CNR1 and subsequent signaling. In Pan paniscus (Pygmy chimpanzee), this protein is Hemoglobin subunit alpha (HBA1).